The sequence spans 324 residues: Polyketide biosynthesis acyltransferase homolog PksD (324 aa).

Residue Ser99 is part of the active site.

The protein resides in the cytoplasm. It participates in antibiotic biosynthesis; bacillaene biosynthesis. Its function is as follows. Probably involved in some intermediate steps for the synthesis of the antibiotic polyketide bacillaene which is involved in secondary metabolism. The protein is Polyketide biosynthesis acyltransferase homolog PksD (pksD) of Bacillus subtilis (strain 168).